The following is a 368-amino-acid chain: uncharacterized protein (368 aa).

Belongs to the YCR102c/YLR460c/YNL134c family.

This is an uncharacterized protein from Saccharomyces cerevisiae (strain ATCC 204508 / S288c) (Baker's yeast).